A 1196-amino-acid chain; its full sequence is Protein BRASSINOSTEROID INSENSITIVE 1 (1196 aa).

An N-terminal signal peptide occupies residues 1 to 23; it reads MKTFSSFFLSVTTLFFFSFFSLS. A Cys pair 1 motif is present at residues 62 to 69; the sequence is CTFDGVTC. 21 LRR repeats span residues 71-98, 99-121, 122-146, 148-169, 172-197, 199-221, 222-244, 245-268, 269-290, 291-314, 316-338, 339-363, 364-388, 390-413, 415-439, 441-463, 464-487, 488-511, 513-535, 536-559, and 561-583; these read DDKVTSIDLSSKPLNVGFSAVSSSLLSL, TGLESLFLSNSHINGSVSGFKCS, ASLTSLDLSRNSLSGPVTTLTSLGS, SGLKFLNVSSNTLDFPGKVSGG, LNSLEVLDLSANSISGANVVGWVLSD, CGELKHLAISGNKISGDVDVSRC, VNLEFLDVSSNNFSTGIPFLGDC, SALQHLDISGNKLSGDFSRAISTC, TELKLLNISSNQFVGPIPPLPL, KSLQYLSLAENKFTGEIPDFLSGA, DTLTGLDLSGNHFYGAVPPFFGS, CSLLESLALSSNNFSGELPMDTLLK, MRGLKVLDLSFNEFSGELPESLTNL, ASLLTLDLSSNNFSGPILPNLCQN, KNTLQELYLQNNGFTGKIPPTLSNC, ELVSLHLSFNYLSGTIPSSLGSL, SKLRDLKLWLNMLEGEIPQELMYV, KTLETLILDFNDLTGEIPSGLSNC, NLNWISLSNNRLTGEIPKWIGRL, ENLAILKLSNNSFSGNIPAELGDC, and SLIWLDLNTNLFNGTIPAAMFKQ. A glycan (N-linked (GlcNAc...) asparagine) is linked at asparagine 112. A glycan (N-linked (GlcNAc...) asparagine) is linked at asparagine 154. Asparagine 233 is a glycosylation site (N-linked (GlcNAc...) asparagine). Asparagine 275 is a glycosylation site (N-linked (GlcNAc...) asparagine). N-linked (GlcNAc...) asparagine glycans are attached at residues asparagine 351, asparagine 387, asparagine 401, and asparagine 438. Asparagine 510 carries an N-linked (GlcNAc...) asparagine glycan. N-linked (GlcNAc...) asparagine glycans are attached at residues asparagine 545 and asparagine 573. Brassinolide is bound at residue tyrosine 597. An N-linked (GlcNAc...) asparagine glycan is attached at asparagine 636. The SERK1 binding stretch occupies residues 640-642; it reads RVY. Brassinolide contacts are provided by tyrosine 642 and serine 647. A glycan (N-linked (GlcNAc...) asparagine) is linked at asparagine 653. LRR repeat units follow at residues 653 to 677, 678 to 701, 702 to 725, and 727 to 750; these read NGSMMFLDMSYNMLSGYIPKEIGSM, PYLFILNLGHNDISGSIPDEVGDL, RGLNILDLSSNKLDGRIPQAMSAL, and MLTEIDLSNNNLSGPIPEMGQFET. Asparagine 705 is a brassinolide binding site. An SERK1 binding region spans residues 726-729; the sequence is TMLT. N-linked (GlcNAc...) asparagine glycosylation is present at asparagine 737. The segment at 746–750 is SERK1 binding; that stretch reads GQFET. The short motif at 763–770 is the Cys pair 2 element; the sequence is CGYPLPRC. A helical membrane pass occupies residues 793 to 813; it reads AGSVAMGLLFSFVCIFGLILV. Phosphotyrosine is present on tyrosine 831. Phosphoserine is present on serine 838. Threonine 842, threonine 846, and threonine 851 each carry phosphothreonine. Serine 858 carries the phosphoserine modification. Residues threonine 872 and threonine 880 each carry the phosphothreonine modification. One can recognise a Protein kinase domain in the interval 883-1158; the sequence is FHNDSLIGSG…VQVMAMFKEI (276 aa). A phosphoserine mark is found at serine 887 and serine 891. ATP contacts are provided by residues 889-897 and lysine 911; that span reads IGSGGFGDV. Position 956 is a phosphotyrosine (tyrosine 956). Residues 957-959 and 963-966 each bind ATP; these read EFM and SLED. Serine 981 carries the phosphoserine modification. Threonine 982 is subject to Phosphothreonine. Catalysis depends on aspartate 1009, which acts as the Proton acceptor. Residues 1009–1014 and aspartate 1027 each bind ATP; that span reads DMKSSN. The residue at position 1035 (serine 1035) is a Phosphoserine. Position 1039 is a phosphothreonine (threonine 1039). Phosphoserine is present on residues serine 1042 and serine 1044. Phosphothreonine occurs at positions 1045 and 1049. Tyrosine 1052 is modified (phosphotyrosine). Serine 1060 is subject to Phosphoserine. Tyrosine 1072 carries the phosphotyrosine modification. A phosphoserine mark is found at serine 1166 and serine 1168. Position 1169 is a phosphothreonine (threonine 1169). Residues serine 1172 and serine 1179 each carry the phosphoserine modification. Position 1180 is a phosphothreonine (threonine 1180). Position 1187 is a phosphoserine (serine 1187).

Belongs to the protein kinase superfamily. Ser/Thr protein kinase family. As to quaternary structure, monomer or homodimer in the plasma membrane. Heterodimer with BAK1 in the endosomes. Interacts with SERK1 and TTL in a kinase-dependent manner. Bind to SERK1 in a brassinolide-dependent manner. Component of the SERK1 signaling complex, composed of KAPP, CDC48A, GRF6 or GRF7, SERK1, SERK2, SERK3/BAK1 and BRI1. Interacts with CDG1. No interactions with PSKR1 or CNGC17. Interacts with BIK1. Interacts with B'ALPHA, B'BETA, B'GAMMA and B'ETA. Interacts with BSK1 and BSK3. Interacts with BSK5, BSK6 and BSK11. Post-translationally, autophosphorylated on Tyr-831, Tyr-956 and maybe Tyr-1072. Phosphorylated on at least 12 sites, with a preference for Ser residues. Transphosphorylated on Ser-887 by SERK1 and on Ser-838, Thr-846, Ser-858 and Ser-1166 by BAK1. Phosphorylation on Ser-1166 enhances the kinase activity. In terms of processing, glycosylated. Expressed ubiquitously.

The protein localises to the cell membrane. Its subcellular location is the endosome membrane. The enzyme catalyses L-seryl-[protein] + ATP = O-phospho-L-seryl-[protein] + ADP + H(+). The catalysed reaction is L-threonyl-[protein] + ATP = O-phospho-L-threonyl-[protein] + ADP + H(+). It catalyses the reaction L-tyrosyl-[protein] + ATP = O-phospho-L-tyrosyl-[protein] + ADP + H(+). Activated by Ser and Thr phosphorylation. In terms of biological role, receptor with a dual specificity kinase activity acting on both serine/threonine- and tyrosine-containing substrates. Regulates, in response to brassinosteroid binding, a signaling cascade involved in plant development, including expression of light- and stress-regulated genes, promotion of cell elongation, normal leaf and chloroplast senescence, and flowering. Binds brassinolide (BL), and less effectively castasterone (CS), but not 2,3,22,23-O-tetramethylbrassinolide or ecdysone. May be involved in a feedback regulation of brassinosteroid biosynthesis. Phosphorylates BRI1-associated receptor kinase 1 (BAK1), Transthyretin-Like protein (TTL) and SERK1 on 'Ser-299' and 'Thr-462' in vitro. May have a guanylyl cyclase activity. Phosphorylates BSK1, BSK2 and BSK3 in vitro. Phosphorylates BSK1, BSK3, BSK5, BSK6, BSK8 and BSK11 in vitro. This Arabidopsis thaliana (Mouse-ear cress) protein is Protein BRASSINOSTEROID INSENSITIVE 1.